A 302-amino-acid polypeptide reads, in one-letter code: Pentatricopeptide repeat-containing protein At4g38150 (302 aa).

Polar residues predominate over residues 26–40 (SATRFLSTGDNGQVD). 2 disordered regions span residues 26–82 (SATR…TTLS) and 94–116 (VNQD…PPPE). A compositionally biased stretch (basic and acidic residues) spans 54–67 (LRGERSSNSHREPP). PPR repeat units lie at residues 130–164 (LIPN…GTIP), 165–199 (EVVI…GIAP), 200–234 (NAFS…GHSP), and 235–269 (NVPT…GFAV).

It belongs to the PPR family. P subfamily.

The protein is Pentatricopeptide repeat-containing protein At4g38150 of Arabidopsis thaliana (Mouse-ear cress).